The chain runs to 560 residues: N-acetylglucosamine-6-sulfatase (560 aa).

Residues 1 to 25 (MRLLSLAPDRPRRGGPRHLTSGSPA) form a disordered region. The signal sequence occupies residues 1–48 (MRLLSLAPDRPRRGGPRHLTSGSPALPPPPPLLLLLLLLGGCLGVSGA). Ca(2+) contacts are provided by aspartate 63, aspartate 64, and cysteine 99. The active-site Nucleophile is the cysteine 99. A 3-oxoalanine (Cys) modification is found at cysteine 99. N-linked (GlcNAc...) asparagine glycosylation is found at asparagine 119, asparagine 125, asparagine 191, asparagine 206, asparagine 218, asparagine 287, and asparagine 325. Ca(2+) contacts are provided by aspartate 334 and asparagine 335. 6 N-linked (GlcNAc...) asparagine glycosylation sites follow: asparagine 370, asparagine 395, asparagine 413, asparagine 430, asparagine 457, and asparagine 488. Serine 549 is subject to Phosphoserine.

Belongs to the sulfatase family. Ca(2+) serves as cofactor. In terms of processing, the conversion to 3-oxoalanine (also known as C-formylglycine, FGly), of a serine or cysteine residue in prokaryotes and of a cysteine residue in eukaryotes, is critical for catalytic activity.

The protein resides in the lysosome. The catalysed reaction is Hydrolysis of the 6-sulfate groups of the N-acetyl-D-glucosamine 6-sulfate units of heparan sulfate and keratan sulfate.. In terms of biological role, hydrolyzes 6-sulfate groups in N-acetyl-d-glucosaminide units of heparin sulfate and keratan sulfate. This is N-acetylglucosamine-6-sulfatase (GNS) from Bos taurus (Bovine).